Reading from the N-terminus, the 100-residue chain is MQLTPREVEKLMIYTLSDVAFKRKARGLKLNYPEAVSIITVTALEGARDGKSLEDVMKEASKVLTKDDVMEGVADLIPNVQVEAIFTDGSRLVTVHDPIK.

Belongs to the urease gamma subunit family. As to quaternary structure, heterotrimer of UreA (gamma), UreB (beta) and UreC (alpha) subunits. Three heterotrimers associate to form the active enzyme.

The protein localises to the cytoplasm. It catalyses the reaction urea + 2 H2O + H(+) = hydrogencarbonate + 2 NH4(+). The protein operates within nitrogen metabolism; urea degradation; CO(2) and NH(3) from urea (urease route): step 1/1. The chain is Urease subunit gamma from Yersinia rohdei.